The chain runs to 246 residues: Probable hydroxyethylthiazole kinase (246 aa).

Residue Met50 participates in substrate binding. ATP contacts are provided by Arg125 and Thr145. Gly172 provides a ligand contact to substrate.

This sequence belongs to the Thz kinase family. Requires Mg(2+) as cofactor.

The enzyme catalyses 5-(2-hydroxyethyl)-4-methylthiazole + ATP = 4-methyl-5-(2-phosphooxyethyl)-thiazole + ADP + H(+). It functions in the pathway cofactor biosynthesis; thiamine diphosphate biosynthesis; 4-methyl-5-(2-phosphoethyl)-thiazole from 5-(2-hydroxyethyl)-4-methylthiazole: step 1/1. Functionally, catalyzes the phosphorylation of the hydroxyl group of 4-methyl-5-beta-hydroxyethylthiazole (THZ). In Agrobacterium fabrum (strain C58 / ATCC 33970) (Agrobacterium tumefaciens (strain C58)), this protein is Probable hydroxyethylthiazole kinase (thiM).